The primary structure comprises 474 residues: tRNA-2-methylthio-N(6)-dimethylallyladenosine synthase (474 aa).

The 118-residue stretch at 3–120 folds into the MTTase N-terminal domain; the sequence is QKLHIKTWGC…LPEMINQIRA (118 aa). Cys-12, Cys-49, Cys-83, Cys-157, Cys-161, and Cys-164 together coordinate [4Fe-4S] cluster. The Radical SAM core domain maps to 143–375; the sequence is KAEGPTAFVS…QQRINNQAAQ (233 aa). The region spanning 378–441 is the TRAM domain; sequence RAMLGTEQRV…TNSLRGDVVR (64 aa).

This sequence belongs to the methylthiotransferase family. MiaB subfamily. Monomer. Requires [4Fe-4S] cluster as cofactor.

It localises to the cytoplasm. It catalyses the reaction N(6)-dimethylallyladenosine(37) in tRNA + (sulfur carrier)-SH + AH2 + 2 S-adenosyl-L-methionine = 2-methylsulfanyl-N(6)-dimethylallyladenosine(37) in tRNA + (sulfur carrier)-H + 5'-deoxyadenosine + L-methionine + A + S-adenosyl-L-homocysteine + 2 H(+). Functionally, catalyzes the methylthiolation of N6-(dimethylallyl)adenosine (i(6)A), leading to the formation of 2-methylthio-N6-(dimethylallyl)adenosine (ms(2)i(6)A) at position 37 in tRNAs that read codons beginning with uridine. The polypeptide is tRNA-2-methylthio-N(6)-dimethylallyladenosine synthase (Mannheimia succiniciproducens (strain KCTC 0769BP / MBEL55E)).